Here is a 227-residue protein sequence, read N- to C-terminus: TMF-regulated nuclear protein 1 (227 aa).

Disordered stretches follow at residues 1–72 (MPGC…ELQR) and 200–227 (GRLRRGHGPEPDSPFRRSPPRGPASPQR). Positions 22-55 (SPPPPWDPMPSSQPPPPTPTLTPTPTPGQSPPLP) are enriched in pro residues.

Interacts with TMF1; may regulate TRNP1 proteasomal degradation. In terms of processing, ubiquitinated, leading to its degradation by the proteasome.

The protein localises to the nucleus. Its function is as follows. DNA-binding factor that regulates the expression of a subset of genes and plays a key role in tangential, radial, and lateral expansion of the brain neocortex. Regulates neural stem cells proliferation and the production of intermediate neural progenitors and basal radial glial cells affecting the process of cerebral cortex gyrification. May control the proliferation rate of cells by regulating their progression through key cell-cycle transition points. This Homo sapiens (Human) protein is TMF-regulated nuclear protein 1 (TRNP1).